The primary structure comprises 136 residues: ATP synthase epsilon chain (136 aa).

The protein belongs to the ATPase epsilon chain family. F-type ATPases have 2 components, CF(1) - the catalytic core - and CF(0) - the membrane proton channel. CF(1) has five subunits: alpha(3), beta(3), gamma(1), delta(1), epsilon(1). CF(0) has three main subunits: a, b and c.

Its subcellular location is the cell membrane. In terms of biological role, produces ATP from ADP in the presence of a proton gradient across the membrane. The protein is ATP synthase epsilon chain of Ureaplasma urealyticum serovar 10 (strain ATCC 33699 / Western).